A 543-amino-acid chain; its full sequence is CTP synthase (543 aa).

The amidoligase domain stretch occupies residues 1–267 (MKQTKYIFVT…LSPIAEILDL (267 aa)). Serine 15 contacts CTP. Serine 15 is a UTP binding site. Residues 16 to 21 (SLGKGI) and aspartate 73 contribute to the ATP site. Residues aspartate 73 and glutamate 141 each coordinate Mg(2+). Residues 148 to 150 (DIE), 188 to 193 (KTKPTQ), and lysine 224 each bind CTP. Residues 188–193 (KTKPTQ) and lysine 224 each bind UTP. In terms of domain architecture, Glutamine amidotransferase type-1 spans 292–543 (KIAFVGKYVD…IKAAINYEDN (252 aa)). L-glutamine is bound at residue glycine 354. The Nucleophile; for glutamine hydrolysis role is filled by cysteine 381. Residues 382 to 385 (LGMQ), glutamate 405, and arginine 473 each bind L-glutamine. Catalysis depends on residues histidine 516 and glutamate 518.

This sequence belongs to the CTP synthase family. Homotetramer.

The catalysed reaction is UTP + L-glutamine + ATP + H2O = CTP + L-glutamate + ADP + phosphate + 2 H(+). It carries out the reaction L-glutamine + H2O = L-glutamate + NH4(+). The enzyme catalyses UTP + NH4(+) + ATP = CTP + ADP + phosphate + 2 H(+). The protein operates within pyrimidine metabolism; CTP biosynthesis via de novo pathway; CTP from UDP: step 2/2. Its activity is regulated as follows. Allosterically activated by GTP, when glutamine is the substrate; GTP has no effect on the reaction when ammonia is the substrate. The allosteric effector GTP functions by stabilizing the protein conformation that binds the tetrahedral intermediate(s) formed during glutamine hydrolysis. Inhibited by the product CTP, via allosteric rather than competitive inhibition. Its function is as follows. Catalyzes the ATP-dependent amination of UTP to CTP with either L-glutamine or ammonia as the source of nitrogen. Regulates intracellular CTP levels through interactions with the four ribonucleotide triphosphates. In Campylobacter jejuni subsp. jejuni serotype O:2 (strain ATCC 700819 / NCTC 11168), this protein is CTP synthase.